The chain runs to 409 residues: Pleckstrin homology domain-containing family O member 1 (409 aa).

A disordered region spans residues 1–20; sequence MMKKNNSTKRGPQDGNHQCA. The region spanning 21-132 is the PH domain; sequence PPEKVGWVRK…WINALNSAIT (112 aa). The segment at 133–193 is interaction with capping proteins (CPs); sequence RAKNRVLDEV…MLTLDLIQEE (61 aa). Residues 136–308 form an interaction with ATM, CKIP, IFP35 and NMI region; that stretch reads NRVLDEVTVE…PHAPGQLSRI (173 aa). Disordered stretches follow at residues 218–304, 325–350, and 390–409; these read LAGS…APGQ, EVQGLGDGKRKAKEPPRSPPDSESEQ, and TPDSHLRQTTQHSQYRKSLM. A phosphoserine mark is found at Ser-227 and Ser-271. Residues 308-409 are negative regulator of AP-1 activity; sequence IQDLVARKLE…QHSQYRKSLM (102 aa). Residues 331–340 are compositionally biased toward basic and acidic residues; it reads DGKRKAKEPP. Ser-342 is modified (phosphoserine). Residues 390 to 402 show a composition bias toward polar residues; that stretch reads TPDSHLRQTTQHS.

Heterodimer or homodimer. Interacts with CK2 and actin capping subunits (capping protein CP-alpha and CP-beta). CKIP1 and CK2 together inhibit the activity of actin capping protein at the barbed ends of actin filaments. Interacts with ATM, IFP35, JUN, JUND, NMI and PI3K. Interacts with AKT1, AKT2 and AKT3 (each isozyme of PKB), PtdIns(3,5)P2, PtdIns(4,5)P2 and PtdIns(3,4,5)P2. In terms of processing, C-terminal fragments could be released during apoptosis via caspase-3-dependent cleavage.

The protein localises to the membrane. It localises to the nucleus. The protein resides in the cytoplasm. In terms of biological role, plays a role in the regulation of the actin cytoskeleton through its interactions with actin capping protein (CP). May function to target CK2 to the plasma membrane thereby serving as an adapter to facilitate the phosphorylation of CP by protein kinase 2 (CK2). Appears to target ATM to the plasma membrane. Also implicated in PI3K-regulated muscle differentiation, the regulation of AP-1 activity (plasma membrane bound AP-1 regulator that translocates to the nucleus) and the promotion of apoptosis induced by tumor necrosis factor TNF. When bound to PKB, it inhibits it probably by decreasing PKB level of phosphorylation. This is Pleckstrin homology domain-containing family O member 1 (PLEKHO1) from Bos taurus (Bovine).